The sequence spans 215 residues: Protein Thf1 (215 aa).

Residues 188–209 adopt a coiled-coil conformation; that stretch reads IELVQETIAAERRKKERRQAEQ.

Belongs to the THF1 family.

Its function is as follows. May be involved in photosynthetic membrane biogenesis. In Synechococcus sp. (strain CC9902), this protein is Protein Thf1.